A 485-amino-acid chain; its full sequence is Trk system potassium uptake protein TrkG (485 aa).

Over 1-5 the chain is Cytoplasmic; sequence MNTSH. The chain crosses the membrane as a helical span at residues 6–32; it reads VRVVTHMCGFLVWLYSLSMLPPMVVAL. The Periplasmic segment spans residues 33–38; sequence FYKEKS. Residues 39–60 form a helical membrane-spanning segment; the sequence is LFVFFITFVIFFCIGGGAWYTT. At 61 to 68 the chain is on the cytoplasmic side; the sequence is KKSGIQLR. A helical transmembrane segment spans residues 69–93; it reads TRDGFIIIVMFWILFSVISAFPLWI. An intramembrane region (helical; Pore-forming) is located at residues 101–112; it reads FIDALFEGVSGI. Residues 113 to 118 lie within the membrane without spanning it; that stretch reads TTTGAT. The selectivity filter part 1 stretch occupies residues 113–118; the sequence is TTTGAT. 2 residues coordinate K(+): T114 and T115. Topologically, residues 119–127 are periplasmic; it reads VIDDVSSLP. A helical membrane pass occupies residues 128 to 153; it reads RAYLYYRSQLNFIGGLGVIVLAVAVL. The Cytoplasmic segment spans residues 154–180; that stretch reads PLLGIGGAKLYQSEMPGPFKDDKLTPR. A helical membrane pass occupies residues 181 to 205; the sequence is LADTSRTLWITYSLLGIACIVCYRL. At 206–208 the chain is on the periplasmic side; that stretch reads AGM. Residue P209 is an intramembrane region. Residues 210–221 constitute an intramembrane region (helical; Pore-forming); sequence LFDAICHGISTV. An intramembrane segment occupies 222 to 227; the sequence is SLGGFS. A selectivity filter part 2 region spans residues 222–227; that stretch reads SLGGFS. Residues L223 and G224 each coordinate K(+). Residues 228 to 237 are Periplasmic-facing; that stretch reads THSESIGYFN. Positions 238–253 form an intramembrane region, helical; sequence NYLVELVAGSFSLLSA. A helical transmembrane segment spans residues 277–297; it reads LRFFLLIALGVIIVTSFQVWH. The helical; Pore-forming intramembrane region spans 303 to 318; the sequence is LHGSFIHSFFLASSML. An intramembrane segment occupies 319–324; that stretch reads TDNGLA. Positions 319–324 are selectivity filter part 3; sequence TDNGLA. 2 residues coordinate K(+): D320 and N321. Residues 325–332 lie on the Periplasmic side of the membrane; it reads TQDYASWP. An intramembrane region (helical) is located at residues 333-344; sequence THTIVFLLLSSF. The note=Loop between two helices intramembrane region spans 345–357; that stretch reads FGGCIGSTCGGIK. A helical transmembrane segment spans residues 392–419; it reads TDRVMRSVWSFFFLYTLFTVFFILVLNG. Residues 420 to 421 lie on the Periplasmic side of the membrane; it reads MG. The stretch at 422 to 423 is an intramembrane region; that stretch reads YD. The helical; Pore-forming intramembrane region spans 424–434; that stretch reads FLTSFATVAAC. The stretch at 435–441 is an intramembrane region; that stretch reads INNMGLG. The selectivity filter part 4 stretch occupies residues 436-441; that stretch reads NNMGLG. The K(+) site is built by N437 and M438. The Periplasmic portion of the chain corresponds to 442-453; the sequence is FGATASSFGVLN. The helical intramembrane region spans 454–465; sequence DIAKCLMCIAMI.

This sequence belongs to the TrkH potassium transport family.

It localises to the cell inner membrane. Its function is as follows. Low-affinity potassium transport system. Interacts with Trk system potassium uptake protein TrkA. Requires TrkE (sapD) for maximal transport activity, low activity is seen in its absence; no further stimulation is seen with SapF. Transport in the absence of SapD is dependent on a high membrane potential and a high cytoplasmic ATP concentration, suggesting this protein may be able to interact with other ATP-binding proteins. Can transport potassium and rubidium. The chain is Trk system potassium uptake protein TrkG (trkG) from Escherichia coli (strain K12).